The primary structure comprises 324 residues: tRNA U34 carboxymethyltransferase (324 aa).

Carboxy-S-adenosyl-L-methionine is bound by residues Lys-91, Trp-105, Lys-110, Gly-130, 152–154 (DPS), 181–182 (IE), Met-196, Tyr-200, and Arg-315.

Belongs to the class I-like SAM-binding methyltransferase superfamily. CmoB family. As to quaternary structure, homotetramer.

The enzyme catalyses carboxy-S-adenosyl-L-methionine + 5-hydroxyuridine(34) in tRNA = 5-carboxymethoxyuridine(34) in tRNA + S-adenosyl-L-homocysteine + H(+). Functionally, catalyzes carboxymethyl transfer from carboxy-S-adenosyl-L-methionine (Cx-SAM) to 5-hydroxyuridine (ho5U) to form 5-carboxymethoxyuridine (cmo5U) at position 34 in tRNAs. The polypeptide is tRNA U34 carboxymethyltransferase (Aliivibrio fischeri (strain MJ11) (Vibrio fischeri)).